The chain runs to 284 residues: Diaminopimelate epimerase (284 aa).

Residues N21, Q54, and N74 each coordinate substrate. C83 serves as the catalytic Proton donor. Substrate-binding positions include 84-85 (GN), N167, N200, and 218-219 (ER). C227 (proton acceptor) is an active-site residue. 228 to 229 (GS) provides a ligand contact to substrate.

It belongs to the diaminopimelate epimerase family. In terms of assembly, homodimer.

The protein resides in the cytoplasm. It carries out the reaction (2S,6S)-2,6-diaminopimelate = meso-2,6-diaminopimelate. It functions in the pathway amino-acid biosynthesis; L-lysine biosynthesis via DAP pathway; DL-2,6-diaminopimelate from LL-2,6-diaminopimelate: step 1/1. Its function is as follows. Catalyzes the stereoinversion of LL-2,6-diaminopimelate (L,L-DAP) to meso-diaminopimelate (meso-DAP), a precursor of L-lysine and an essential component of the bacterial peptidoglycan. The chain is Diaminopimelate epimerase from Buchnera aphidicola subsp. Acyrthosiphon pisum (strain 5A).